We begin with the raw amino-acid sequence, 386 residues long: Beta-citrylglutamate synthase B (386 aa).

The 186-residue stretch at 119 to 304 folds into the ATP-grasp domain; that stretch reads FQELAGHGVP…VAGIIADYAA (186 aa). ATP-binding positions include K158, 193-203, and R219; that span reads QKYVKESHGRD. Mg(2+)-binding residues include D264, E277, and N279. Mn(2+) contacts are provided by D264, E277, and N279. The tract at residues 325–359 is disordered; the sequence is ASETSEPELGPPASTAVDNMSASSSSVDSDPESTE. Residues 338–352 are compositionally biased toward low complexity; the sequence is STAVDNMSASSSSVD.

Belongs to the RimK family. Requires Mg(2+) as cofactor. The cofactor is Mn(2+).

The protein resides in the cytoplasm. It catalyses the reaction citrate + L-glutamate + ATP = beta-citrylglutamate + ADP + phosphate + H(+). The catalysed reaction is N-acetyl-L-aspartate + L-glutamate + ATP = N-acetyl-L-aspartyl-L-glutamate + ADP + phosphate + H(+). In terms of biological role, catalyzes the synthesis of beta-citryl-L-glutamate and N-acetyl-L-aspartyl-L-glutamate. Beta-citryl-L-glutamate is synthesized more efficiently than N-acetyl-L-aspartyl-L-glutamate. This chain is Beta-citrylglutamate synthase B (RIMKLB), found in Homo sapiens (Human).